A 519-amino-acid polypeptide reads, in one-letter code: tRNA-2-methylthio-N(6)-dimethylallyladenosine synthase (519 aa).

Residues 1 to 23 (MNEQQRKQQSQIRTEQANVDRIK) form a disordered region. Over residues 7 to 17 (KQQSQIRTEQA) the composition is skewed to polar residues. The 119-residue stretch at 76 to 194 (KKFLIRTYGC…LPHLVKEALF (119 aa)) folds into the MTTase N-terminal domain. [4Fe-4S] cluster contacts are provided by Cys-85, Cys-121, Cys-155, Cys-231, Cys-235, and Cys-238. One can recognise a Radical SAM core domain in the interval 217-450 (RKGKIKAWVN…VNKQSAASMK (234 aa)). Positions 450-513 (KDYAGKKVKV…TWSLNGVMVE (64 aa)) constitute a TRAM domain.

It belongs to the methylthiotransferase family. MiaB subfamily. In terms of assembly, monomer. Requires [4Fe-4S] cluster as cofactor.

It is found in the cytoplasm. The enzyme catalyses N(6)-dimethylallyladenosine(37) in tRNA + (sulfur carrier)-SH + AH2 + 2 S-adenosyl-L-methionine = 2-methylsulfanyl-N(6)-dimethylallyladenosine(37) in tRNA + (sulfur carrier)-H + 5'-deoxyadenosine + L-methionine + A + S-adenosyl-L-homocysteine + 2 H(+). Its function is as follows. Catalyzes the methylthiolation of N6-(dimethylallyl)adenosine (i(6)A), leading to the formation of 2-methylthio-N6-(dimethylallyl)adenosine (ms(2)i(6)A) at position 37 in tRNAs that read codons beginning with uridine. The protein is tRNA-2-methylthio-N(6)-dimethylallyladenosine synthase of Oceanobacillus iheyensis (strain DSM 14371 / CIP 107618 / JCM 11309 / KCTC 3954 / HTE831).